The sequence spans 267 residues: Phosphate import ATP-binding protein PstB 2 (267 aa).

Residues 21 to 262 enclose the ABC transporter domain; it reads LSTKDVHVYY…AKLQSTNDYV (242 aa). 53–60 serves as a coordination point for ATP; it reads GPSGSGKS.

Belongs to the ABC transporter superfamily. Phosphate importer (TC 3.A.1.7) family. The complex is composed of two ATP-binding proteins (PstB), two transmembrane proteins (PstC and PstA) and a solute-binding protein (PstS).

The protein resides in the cell membrane. The catalysed reaction is phosphate(out) + ATP + H2O = ADP + 2 phosphate(in) + H(+). Functionally, part of the ABC transporter complex PstSACB involved in phosphate import. Responsible for energy coupling to the transport system. This chain is Phosphate import ATP-binding protein PstB 2, found in Streptococcus pneumoniae serotype 4 (strain ATCC BAA-334 / TIGR4).